The sequence spans 1151 residues: Protein kinase C-like 1 (1151 aa).

REM-1 domains are found at residues 1–67 and 106–183; these read MSFS…KTAQ and KYDC…INVD. The tract at residues 64 to 88 is disordered; sequence KTAQQSQGENGSEDNERCNSKEYGF. In terms of domain architecture, C2 spans 190-309; the sequence is QPNDIMDNQQ…IRKKKAGQTN (120 aa). Ser226 bears the Phosphoserine mark. The tract at residues 306 to 331 is disordered; sequence GQTNEQQGWVNASNINGGSSLASEEG. 2 Phorbol-ester/DAG-type zinc fingers span residues 414–461 and 481–531; these read GHHF…VTKC and PHRF…PDFC. Disordered regions lie at residues 546–620 and 649–669; these read QDTK…IIDK and AQQT…SNRR. Over residues 560 to 577 the composition is skewed to polar residues; the sequence is PSAQLGSSIGTANGSDLS. Residues 605 to 620 are compositionally biased toward basic and acidic residues; the sequence is VGRDSPTKQHDPIIDK. Phosphoserine is present on Ser761. The interval 782-816 is disordered; that stretch reads LAPTSTHASRTTDQQSPQKSQTSTSAKHKKRAAKR. Positions 792 to 806 are enriched in low complexity; it reads TTDQQSPQKSQTSTS. The segment covering 807–816 has biased composition (basic residues); that stretch reads AKHKKRAAKR. A Protein kinase domain is found at 824-1083; it reads FVLLKVLGKG…ADEVMEEPFF (260 aa). ATP is bound by residues 830–838 and Lys853; that span reads LGKGNFGKV. Catalysis depends on Asp949, which acts as the Proton acceptor. The AGC-kinase C-terminal domain maps to 1084–1151; sequence RNINFDDILN…FSFMPDDLDL (68 aa).

Belongs to the protein kinase superfamily. AGC Ser/Thr protein kinase family. PKC subfamily.

The enzyme catalyses L-seryl-[protein] + ATP = O-phospho-L-seryl-[protein] + ADP + H(+). It catalyses the reaction L-threonyl-[protein] + ATP = O-phospho-L-threonyl-[protein] + ADP + H(+). In terms of biological role, required for cell growth and for the G2-&gt;M transition of the cell division cycle. Mediates a protein kinase cascade; it activates BCK1 which itself activates MKK1/MKK2. This is Protein kinase C-like 1 (PKC1) from Saccharomyces cerevisiae (strain ATCC 204508 / S288c) (Baker's yeast).